The following is a 931-amino-acid chain: Bifunctional uridylyltransferase/uridylyl-removing enzyme (931 aa).

The uridylyltransferase stretch occupies residues 1 to 383 (MDSVATDSKA…TTGSTWRRVP (383 aa)). Residues 384–739 (ESDDFIVDNN…VGFDPARGVT (356 aa)) are uridylyl-removing. The region spanning 499 to 622 (VDEHLIRCIG…VQSVEQMKLL (124 aa)) is the HD domain. ACT domains follow at residues 740 to 822 (ELTI…AVAR) and 851 to 931 (VIEV…QPAA).

It belongs to the GlnD family. Requires Mg(2+) as cofactor.

The catalysed reaction is [protein-PII]-L-tyrosine + UTP = [protein-PII]-uridylyl-L-tyrosine + diphosphate. It carries out the reaction [protein-PII]-uridylyl-L-tyrosine + H2O = [protein-PII]-L-tyrosine + UMP + H(+). With respect to regulation, uridylyltransferase (UTase) activity is inhibited by glutamine, while glutamine activates uridylyl-removing (UR) activity. Functionally, modifies, by uridylylation and deuridylylation, the PII regulatory proteins (GlnB and homologs), in response to the nitrogen status of the cell that GlnD senses through the glutamine level. Under low glutamine levels, catalyzes the conversion of the PII proteins and UTP to PII-UMP and PPi, while under higher glutamine levels, GlnD hydrolyzes PII-UMP to PII and UMP (deuridylylation). Thus, controls uridylylation state and activity of the PII proteins, and plays an important role in the regulation of nitrogen fixation and metabolism. The polypeptide is Bifunctional uridylyltransferase/uridylyl-removing enzyme (Bradyrhizobium sp. (strain ORS 278)).